The chain runs to 242 residues: Aspartate/glutamate leucyltransferase (242 aa).

It belongs to the R-transferase family. Bpt subfamily.

The protein resides in the cytoplasm. It catalyses the reaction N-terminal L-glutamyl-[protein] + L-leucyl-tRNA(Leu) = N-terminal L-leucyl-L-glutamyl-[protein] + tRNA(Leu) + H(+). It carries out the reaction N-terminal L-aspartyl-[protein] + L-leucyl-tRNA(Leu) = N-terminal L-leucyl-L-aspartyl-[protein] + tRNA(Leu) + H(+). In terms of biological role, functions in the N-end rule pathway of protein degradation where it conjugates Leu from its aminoacyl-tRNA to the N-termini of proteins containing an N-terminal aspartate or glutamate. This chain is Aspartate/glutamate leucyltransferase, found in Alcanivorax borkumensis (strain ATCC 700651 / DSM 11573 / NCIMB 13689 / SK2).